Here is a 519-residue protein sequence, read N- to C-terminus: LysM domain-containing protein ARB_03442 (519 aa).

The signal sequence occupies residues 1-19 (MGQLKQLAGILALASPAIA). Residue asparagine 47 is glycosylated (N-linked (GlcNAc...) asparagine). Positions 312 to 358 (KYYNVVAGDTCASISSEFEVTMDELLTYNPELHPNCENLWANFAICV) constitute a LysM domain. The interval 314-358 (YNVVAGDTCASISSEFEVTMDELLTYNPELHPNCENLWANFAICV) is lysM domain. Over residues 407–416 (PDAPDAQGQT) the composition is skewed to low complexity. A disordered region spans residues 407–458 (PDAPDAQGQTVHDDEPPEEPHIEEPPKDIPAGDDDDRKKAKLPLPSGKYPLP). Over residues 417 to 433 (VHDDEPPEEPHIEEPPK) the composition is skewed to basic and acidic residues. Asparagine 460 carries N-linked (GlcNAc...) asparagine glycosylation. One can recognise a Chitin-binding type-1 domain in the interval 467–510 (DGSCNEYISCVGSPFGVCCSTSGWCGYGKPWCGVGNCVSGYCDT). Disulfide bonds link cysteine 470-cysteine 485, cysteine 476-cysteine 491, cysteine 484-cysteine 498, and cysteine 503-cysteine 508.

It localises to the secreted. Functionally, might have a role in sequestration of chitin oligosaccharides (breakdown products of fungal cell walls that are released during invasion and act as triggers of host immunity) to dampen host defense. This is LysM domain-containing protein ARB_03442 from Arthroderma benhamiae (strain ATCC MYA-4681 / CBS 112371) (Trichophyton mentagrophytes).